The primary structure comprises 512 residues: Maturase K (512 aa).

The protein belongs to the intron maturase 2 family. MatK subfamily.

The protein localises to the plastid. It localises to the chloroplast. In terms of biological role, usually encoded in the trnK tRNA gene intron. Probably assists in splicing its own and other chloroplast group II introns. This is Maturase K from Lilium regale (Regal lily).